Here is a 199-residue protein sequence, read N- to C-terminus: Urease accessory protein UreG (199 aa).

8-15 (GPVGSGKT) serves as a coordination point for GTP.

The protein belongs to the SIMIBI class G3E GTPase family. UreG subfamily. Homodimer. UreH, UreF and UreG form a complex that acts as a GTP-hydrolysis-dependent molecular chaperone, activating the urease apoprotein by helping to assemble the nickel containing metallocenter of UreC. The UreE protein probably delivers the nickel.

Its subcellular location is the cytoplasm. Its function is as follows. Facilitates the functional incorporation of the urease nickel metallocenter. This process requires GTP hydrolysis, probably effectuated by UreG. The sequence is that of Urease accessory protein UreG from Helicobacter pylori (strain P12).